Reading from the N-terminus, the 490-residue chain is Cysteine--tRNA ligase (490 aa).

Position 36 (Cys36) interacts with Zn(2+). The 'HIGH' region signature appears at 38–48; that stretch reads VTVYDYSHIGH. Positions 216, 241, and 245 each coordinate Zn(2+). Residues 278-282 carry the 'KMSKS' region motif; that stretch reads KMSKS. Lys281 is an ATP binding site.

This sequence belongs to the class-I aminoacyl-tRNA synthetase family. As to quaternary structure, monomer. Zn(2+) is required as a cofactor.

It localises to the cytoplasm. The catalysed reaction is tRNA(Cys) + L-cysteine + ATP = L-cysteinyl-tRNA(Cys) + AMP + diphosphate. The chain is Cysteine--tRNA ligase from Magnetococcus marinus (strain ATCC BAA-1437 / JCM 17883 / MC-1).